The sequence spans 275 residues: uncharacterized protein (275 aa).

This is an uncharacterized protein from Methanocaldococcus jannaschii (strain ATCC 43067 / DSM 2661 / JAL-1 / JCM 10045 / NBRC 100440) (Methanococcus jannaschii).